The following is a 408-amino-acid chain: MAVGEKEHEGTVVESGGEKNDSAVVLSASGEKKTTKRKGLFSRLWNAIFRVRGDDFEKRLKNISKEEATVRNRMKRRSITRRNFIRNLIAFSVFFEVIAVSYAIMTTRDEDLDWKLRSFRILPMFLLPAVAFLLYSSLVGFWRMCDRRDQHTLEKLQAEMLGKINELKERTNYYITQQLIQRYDPDPAAKAAAATVLASKLGAESGLKVFVGDESQLEPTAGKNNAKHSGGLRNRKQTNTRGNSAETTPIHHSDNESNHSGTSERITGTEQNQQMVFEHYNPQEYAAHDGSWISRIAALLVGEDPSQSYALICGNCRMHNGLARKEDFPYITYYCPHCRALNKPKHSEEHSLIAPADTLPKVSLKPMESEVINSSSSTSERGNSPIPLLHTPEIVEEVPETAENETPN.

2 disordered regions span residues 218–265 and 367–408; these read EPTA…TSER and MESE…ETPN. Low complexity predominate over residues 369-379; it reads SEVINSSSSTS. The segment covering 394 to 408 has biased composition (acidic residues); the sequence is IVEEVPETAENETPN.

It to C.elegans C05E11.1.

This is an uncharacterized protein from Arabidopsis thaliana (Mouse-ear cress).